Reading from the N-terminus, the 57-residue chain is Insulin (57 aa).

Disulfide bonds link Cys-12–Cys-43, Cys-24–Cys-56, and Cys-42–Cys-47.

This sequence belongs to the insulin family. As to quaternary structure, heterodimer of a B chain and an A chain linked by two disulfide bonds.

The protein resides in the secreted. In terms of biological role, insulin decreases blood glucose concentration. It increases cell permeability to monosaccharides, amino acids and fatty acids. It accelerates glycolysis, the pentose phosphate cycle, and glycogen synthesis in liver. This is Insulin (ins) from Lampetra fluviatilis (European river lamprey).